We begin with the raw amino-acid sequence, 232 residues long: Thiamine import ATP-binding protein ThiQ (232 aa).

Positions 2–230 constitute an ABC transporter domain; that stretch reads LKLTDITWLY…KGSASAIWGI (229 aa). Residue 32 to 39 participates in ATP binding; that stretch reads GPSGAGKS.

The protein belongs to the ABC transporter superfamily. Thiamine importer (TC 3.A.1.19.1) family. As to quaternary structure, the complex is composed of two ATP-binding proteins (ThiQ), two transmembrane proteins (ThiP) and a solute-binding protein (ThiB).

The protein localises to the cell inner membrane. It carries out the reaction thiamine(out) + ATP + H2O = thiamine(in) + ADP + phosphate + H(+). Its function is as follows. Part of the ABC transporter complex ThiBPQ involved in thiamine import. Responsible for energy coupling to the transport system. The protein is Thiamine import ATP-binding protein ThiQ of Shigella flexneri.